The following is a 1487-amino-acid chain: Secretory phospholipase A2 receptor (1487 aa).

Positions 1 to 26 (MVQWLAMLQLLWLQQLLLLGIHQGIA) are cleaved as a signal peptide. Topologically, residues 27-1396 (QDLTHIQEPS…AQPEKGLSHS (1370 aa)) are extracellular. The region spanning 42–165 (KGIFIIQSES…SSGGDICEHP (124 aa)) is the Ricin B-type lectin domain. 4 cysteine pairs are disulfide-bonded: Cys-55–Cys-68, Cys-93–Cys-110, Cys-181–Cys-207, and Cys-195–Cys-222. The N-linked (GlcNAc...) asparagine glycan is linked to Asn-97. Positions 176–224 (AHGMPCVFPFQFKGHWHHDCIREGQKEHLLWCATTSRYEEDEKWGFCPD) constitute a Fibronectin type-II domain. N-linked (GlcNAc...) asparagine glycosylation is present at Asn-239. C-type lectin domains follow at residues 241-357 (SSRI…YICK), 387-504 (FNRK…YICK), 524-643 (HGRF…MSLC), 673-797 (GLAS…WICR), 819-938 (YQNA…SICK), and 964-1095 (FNYK…GFVC). Disulfide bonds link Cys-263-Cys-356, Cys-333-Cys-348, Cys-408-Cys-503, Cys-480-Cys-495, Cys-617-Cys-634, Cys-699-Cys-796, Cys-774-Cys-788, Cys-840-Cys-937, Cys-914-Cys-929, and Cys-1066-Cys-1086. N-linked (GlcNAc...) asparagine glycosylation is present at Asn-928. Residues Asn-1107, Asn-1122, and Asn-1131 are each glycosylated (N-linked (GlcNAc...) asparagine). 2 consecutive C-type lectin domains span residues 1120-1231 (YGNR…GAIC) and 1256-1377 (FKGN…FICK). 3 disulfides stabilise this stretch: Cys-1208–Cys-1222, Cys-1279–Cys-1376, and Cys-1353–Cys-1368. The chain crosses the membrane as a helical span at residues 1397-1417 (IVPVTVTLTLIIALGIFMLCF). At 1418-1487 (WIYKQKSDIF…HKGRPICISP (70 aa)) the chain is on the cytoplasmic side. The short motif at 1435–1441 (GSYYPTL) is the Endocytosis signal element. The segment covering 1463–1475 (DEEVRDAPATESK) has biased composition (basic and acidic residues). A disordered region spans residues 1463–1487 (DEEVRDAPATESKRGHKGRPICISP).

In terms of assembly, interacts with sPLA2-IB/PLA2G1B; this interaction mediates intracellular signaling as well as clearance of extracellular sPLA2-IB/PLA2G1B via endocytotic pathway. Interacts with sPLA2-X/PLA2G10; this interaction mediates sPLA2-X/PLA2G10 clearance and inactivation. In terms of processing, the secretory phospholipase A2 receptor form may be produced by the action of metalloproteinases. It contains all extracellular domains and only lacks transmembrane and cytosolic regions. It is however unclear whether this form is produced by proteolytic cleavage as suggested by some experiments reported by PubMed:11830583, or by alternative splicing. Widely expressed. Present in type II alveolar epithelial cells and a subset of splenic lymphocytes. Present at the surface of polymorphonuclear neutrophils (at protein level).

It is found in the cell membrane. The protein resides in the secreted. Its function is as follows. Receptor for secretory phospholipase A2 (sPLA2). Acts as a receptor for phospholipases sPLA2-IB/PLA2G1B, sPLA2-X/PLA2G10 and, with lower affinity, sPLA2-IIA/PLA2G2A. Also able to bind to snake PA2-like toxins. Although its precise function remains unclear, binding of sPLA2 to its receptor participates in both positive and negative regulation of sPLA2 functions as well as clearance of sPLA2. Binding of sPLA2-IB/PLA2G1B induces various effects depending on the cell type, such as activation of the mitogen-activated protein kinase (MAPK) cascade to induce cell proliferation, the production of lipid mediators, selective release of arachidonic acid in bone marrow-derived mast cells. In neutrophils, binding of sPLA2-IB/PLA2G1B can activate p38 MAPK to stimulate elastase release and cell adhesion. May be involved in responses in pro-inflammatory cytokine productions during endotoxic shock. Also has endocytic properties and rapidly internalizes sPLA2 ligands, which is particularly important for the clearance of extracellular sPLA2s to protect their potent enzymatic activities. The soluble secretory phospholipase A2 receptor form is circulating and acts as a negative regulator of sPLA2 functions by blocking the biological functions of sPLA2-IB/PLA2G1B and sPLA2-X/PLA2G10. In podocytes, binding of sPLA2-IB/PLA2G1B can regulate podocyte survival and glomerular homeostasis. The chain is Secretory phospholipase A2 receptor (Pla2r1) from Mus musculus (Mouse).